A 115-amino-acid chain; its full sequence is Tyrosine-protein phosphatase 21 (115 aa).

One can recognise a Tyrosine-protein phosphatase domain in the interval 1-115; it reads WLMIVEKECR…EIGGDAPMVV (115 aa). D83 is a binding site for substrate.

It belongs to the protein-tyrosine phosphatase family.

The enzyme catalyses O-phospho-L-tyrosyl-[protein] + H2O = L-tyrosyl-[protein] + phosphate. This is Tyrosine-protein phosphatase 21 (STY-21) from Styela plicata (Wrinkled sea squirt).